We begin with the raw amino-acid sequence, 160 residues long: MAEKTYVMTLAEKKQLEAELEEYKLVRRPEVVERIKIARSYGDLSENSEYEAAKDEQAFVEGQIQILETKIRYAEIVDSDAVANDEVAIGKTVVVQEVGTSDKDTYHIVGAAGADIFSGKISNESPIAQALIGKKVGDKVAIESPAGSYSVEILSVEKTS.

A coiled-coil region spans residues 1-72; sequence MAEKTYVMTL…QIQILETKIR (72 aa).

This sequence belongs to the GreA/GreB family.

Necessary for efficient RNA polymerase transcription elongation past template-encoded arresting sites. The arresting sites in DNA have the property of trapping a certain fraction of elongating RNA polymerases that pass through, resulting in locked ternary complexes. Cleavage of the nascent transcript by cleavage factors such as GreA or GreB allows the resumption of elongation from the new 3'terminus. GreA releases sequences of 2 to 3 nucleotides. The chain is Transcription elongation factor GreA from Streptococcus thermophilus (strain ATCC BAA-491 / LMD-9).